We begin with the raw amino-acid sequence, 470 residues long: Neuraminidase (470 aa).

At 1–14 the chain is on the intravirion side; sequence MNPNQKIITIGSAS. The tract at residues 11–32 is involved in apical transport and lipid raft association; that stretch reads GSASLGLVILNVILHVVSIIVT. Residues 15-35 traverse the membrane as a helical segment; sequence LGLVILNVILHVVSIIVTVLV. The segment at 32–86 is hypervariable stalk region; the sequence is TVLVLSNNGTGPNCNGTIIREYNETVRVERITQWYNTNIIEYIEEPSNEYYMSNT. At 36–470 the chain is on the virion surface side; the sequence is LSNNGTGPNC…AILPFDIDKM (435 aa). N-linked (GlcNAc...) asparagine; by host glycosylation is found at asparagine 39, asparagine 46, and asparagine 54. The tract at residues 89–470 is head of neuraminidase; that stretch reads LCEAQGFAPF…AILPFDIDKM (382 aa). 8 disulfide bridges follow: cysteine 90/cysteine 417, cysteine 122/cysteine 127, cysteine 182/cysteine 229, cysteine 231/cysteine 236, cysteine 277/cysteine 290, cysteine 279/cysteine 288, cysteine 316/cysteine 335, and cysteine 421/cysteine 446. Substrate is bound at residue arginine 116. N-linked (GlcNAc...) asparagine; by host glycosylation is present at asparagine 144. Aspartate 149 (proton donor/acceptor) is an active-site residue. Residue arginine 150 participates in substrate binding. 275-276 is a binding site for substrate; that stretch reads EE. Arginine 291 is a binding site for substrate. Ca(2+) is bound at residue aspartate 292. A glycan (N-linked (GlcNAc...) asparagine; by host) is linked at asparagine 293. Ca(2+)-binding residues include glycine 296 and aspartate 322. Arginine 368 lines the substrate pocket. An N-linked (GlcNAc...) asparagine; by host glycan is attached at asparagine 398. Residue tyrosine 402 is the Nucleophile of the active site.

It belongs to the glycosyl hydrolase 34 family. As to quaternary structure, homotetramer. Ca(2+) serves as cofactor. In terms of processing, N-glycosylated.

The protein localises to the virion membrane. It is found in the host apical cell membrane. It catalyses the reaction Hydrolysis of alpha-(2-&gt;3)-, alpha-(2-&gt;6)-, alpha-(2-&gt;8)- glycosidic linkages of terminal sialic acid residues in oligosaccharides, glycoproteins, glycolipids, colominic acid and synthetic substrates.. Its activity is regulated as follows. Inhibited by the neuraminidase inhibitors zanamivir (Relenza) and oseltamivir (Tamiflu). These drugs interfere with the release of progeny virus from infected cells and are effective against all influenza strains. Resistance to neuraminidase inhibitors is quite rare. In terms of biological role, catalyzes the removal of terminal sialic acid residues from viral and cellular glycoconjugates. Cleaves off the terminal sialic acids on the glycosylated HA during virus budding to facilitate virus release. Additionally helps virus spread through the circulation by further removing sialic acids from the cell surface. These cleavages prevent self-aggregation and ensure the efficient spread of the progeny virus from cell to cell. Otherwise, infection would be limited to one round of replication. Described as a receptor-destroying enzyme because it cleaves a terminal sialic acid from the cellular receptors. May facilitate viral invasion of the upper airways by cleaving the sialic acid moieties on the mucin of the airway epithelial cells. Likely to plays a role in the budding process through its association with lipid rafts during intracellular transport. May additionally display a raft-association independent effect on budding. Plays a role in the determination of host range restriction on replication and virulence. Sialidase activity in late endosome/lysosome traffic seems to enhance virus replication. This is Neuraminidase from Influenza A virus (strain A/Equine/Miami/1/1963 H3N8).